The following is a 671-amino-acid chain: NADH-quinone oxidoreductase subunit G (671 aa).

A 2Fe-2S ferredoxin-type domain is found at 1–78 (MIKLNVDGSE…GMVIHTDTPM (78 aa)). Positions 34, 45, 48, and 62 each coordinate [2Fe-2S] cluster. Residues 78–117 (MVKKAREGVMEFLLINHPLDCPICDQGGECNLQDQAFRYG) enclose the 4Fe-4S His(Cys)3-ligated-type domain. Residues histidine 94, cysteine 98, cysteine 101, cysteine 107, cysteine 146, cysteine 149, cysteine 152, and cysteine 196 each contribute to the [4Fe-4S] cluster site. Residues 215–271 (LKHTASIGVHDAEGSNIRIDSRGDEVMRILPRVNEEINEEWLSDKNRFSYDGLKYQR) form the 4Fe-4S Mo/W bis-MGD-type domain.

The protein belongs to the complex I 75 kDa subunit family. Requires [2Fe-2S] cluster as cofactor. [4Fe-4S] cluster serves as cofactor.

It catalyses the reaction a quinone + NADH + 5 H(+)(in) = a quinol + NAD(+) + 4 H(+)(out). NDH-1 shuttles electrons from NADH, via FMN and iron-sulfur (Fe-S) centers, to quinones in the respiratory chain. Couples the redox reaction to proton translocation (for every two electrons transferred, four hydrogen ions are translocated across the cytoplasmic membrane), and thus conserves the redox energy in a proton gradient. This Rickettsia conorii (strain ATCC VR-613 / Malish 7) protein is NADH-quinone oxidoreductase subunit G (nuoG).